Reading from the N-terminus, the 124-residue chain is Ribonuclease pancreatic (124 aa).

The segment covering 1–13 (SETAAEKFERQHM) has biased composition (basic and acidic residues). The disordered stretch occupies residues 1 to 23 (SETAAEKFERQHMDSYSSSSSNS). Positions 7 and 10 each coordinate substrate. Histidine 12 (proton acceptor) is an active-site residue. 4 cysteine pairs are disulfide-bonded: cysteine 26–cysteine 84, cysteine 40–cysteine 95, cysteine 58–cysteine 110, and cysteine 65–cysteine 72. Residues 41 to 45 (KPVNT), lysine 66, and arginine 85 contribute to the substrate site. Histidine 119 serves as the catalytic Proton donor.

Belongs to the pancreatic ribonuclease family. Monomer. Interacts with and forms tight 1:1 complexes with RNH1. Dimerization of two such complexes may occur. Interaction with RNH1 inhibits this protein. Pancreas.

It is found in the secreted. The enzyme catalyses an [RNA] containing cytidine + H2O = an [RNA]-3'-cytidine-3'-phosphate + a 5'-hydroxy-ribonucleotide-3'-[RNA].. It catalyses the reaction an [RNA] containing uridine + H2O = an [RNA]-3'-uridine-3'-phosphate + a 5'-hydroxy-ribonucleotide-3'-[RNA].. Its function is as follows. Endonuclease that catalyzes the cleavage of RNA on the 3' side of pyrimidine nucleotides. Acts on single-stranded and double-stranded RNA. The protein is Ribonuclease pancreatic (RNASE1) of Camelus dromedarius (Dromedary).